We begin with the raw amino-acid sequence, 172 residues long: Signal peptidase complex catalytic subunit SEC11 (172 aa).

The Cytoplasmic segment spans residues 1–14 (MLSSLQNPRQAAAQ). A helical; Signal-anchor for type II membrane protein membrane pass occupies residues 15–35 (LMNFGLILSTAFMMWKGLSVI). Topologically, residues 36–172 (TDSPSPIVVV…MGLVVVLQRE (137 aa)) are lumenal. Active-site charge relay system residues include Ser49, His90, and Asp115. Positions 158–169 (VMLGIMGLVVVL) are C-terminal short (CTS) helix.

Belongs to the peptidase S26B family. In terms of assembly, component of the signal peptidase complex (SPC) composed of a catalytic subunit SEC11 and three accessory subunits SPC1, SPC2 and SPC3. The complex induces a local thinning of the ER membrane which is used to measure the length of the signal peptide (SP) h-region of protein substrates. This ensures the selectivity of the complex towards h-regions shorter than 18-20 amino acids. SPC associates with the translocon complex.

The protein localises to the endoplasmic reticulum membrane. It carries out the reaction Cleavage of hydrophobic, N-terminal signal or leader sequences from secreted and periplasmic proteins.. Its function is as follows. Catalytic component of the signal peptidase complex (SPC) which catalyzes the cleavage of N-terminal signal sequences from nascent proteins as they are translocated into the lumen of the endoplasmic reticulum. Specifically cleaves N-terminal signal peptides that contain a hydrophobic alpha-helix (h-region) shorter than 18-20 amino acids. The chain is Signal peptidase complex catalytic subunit SEC11 (SEC11) from Chaetomium globosum (strain ATCC 6205 / CBS 148.51 / DSM 1962 / NBRC 6347 / NRRL 1970) (Soil fungus).